Here is a 216-residue protein sequence, read N- to C-terminus: Large ribosomal subunit protein uL3 (216 aa).

The interval 119–143 (GYQGNIHKDGQSRGPMAHGSRYHRR) is disordered.

This sequence belongs to the universal ribosomal protein uL3 family. In terms of assembly, part of the 50S ribosomal subunit. Forms a cluster with proteins L14 and L19.

In terms of biological role, one of the primary rRNA binding proteins, it binds directly near the 3'-end of the 23S rRNA, where it nucleates assembly of the 50S subunit. This chain is Large ribosomal subunit protein uL3, found in Levilactobacillus brevis (strain ATCC 367 / BCRC 12310 / CIP 105137 / JCM 1170 / LMG 11437 / NCIMB 947 / NCTC 947) (Lactobacillus brevis).